The chain runs to 160 residues: uncharacterized protein (160 aa).

In terms of domain architecture, N-acetyltransferase spans L7–D151.

This is an uncharacterized protein from Bacillus velezensis (strain DSM 23117 / BGSC 10A6 / LMG 26770 / FZB42) (Bacillus amyloliquefaciens subsp. plantarum).